A 180-amino-acid polypeptide reads, in one-letter code: MVKESIPKEGENIKIQSYKHDGNIHRVWSETTILKGTDHVIIGGNDHTLVTESDGRTWITREPAIVYFHSEFWFNVICMFREDGIYYYCNLSSPFVCDEEALKYIDYDLDIKVYPNGKYHLLDEDEYEQHMNQMNYPHDIDVILRRNVDILQQWIEQKKGPFAPDFIKVWKERYKKIRNY.

Catalysis depends on R26, which acts as the Proton donor. Mg(2+)-binding residues include N90, D106, D108, D110, D123, and E126.

It belongs to the Ntdp family. Requires Mg(2+) as cofactor.

The catalysed reaction is a ribonucleoside 5'-triphosphate + H2O = a ribonucleoside 5'-diphosphate + phosphate + H(+). It catalyses the reaction a ribonucleoside 5'-diphosphate + H2O = a ribonucleoside 5'-phosphate + phosphate + H(+). Functionally, has nucleoside phosphatase activity towards nucleoside triphosphates and nucleoside diphosphates. The protein is Nucleoside triphosphate/diphosphate phosphatase of Staphylococcus haemolyticus (strain JCSC1435).